We begin with the raw amino-acid sequence, 601 residues long: Glutamine--fructose-6-phosphate aminotransferase [isomerizing] (601 aa).

The active-site Nucleophile; for GATase activity is cysteine 2. The region spanning 2-216 is the Glutamine amidotransferase type-2 domain; that stretch reads CGIVGYIGTN…DKEIVIVTKD (215 aa). SIS domains are found at residues 282 to 421 and 453 to 591; these read IIDE…EIGD and IAGE…VDKP. The active-site For Fru-6P isomerization activity is the lysine 596.

In terms of assembly, homodimer.

The protein localises to the cytoplasm. The enzyme catalyses D-fructose 6-phosphate + L-glutamine = D-glucosamine 6-phosphate + L-glutamate. In terms of biological role, catalyzes the first step in hexosamine metabolism, converting fructose-6P into glucosamine-6P using glutamine as a nitrogen source. In Listeria monocytogenes serovar 1/2a (strain ATCC BAA-679 / EGD-e), this protein is Glutamine--fructose-6-phosphate aminotransferase [isomerizing].